A 75-amino-acid chain; its full sequence is Exodeoxyribonuclease 7 small subunit (75 aa).

This sequence belongs to the XseB family. Heterooligomer composed of large and small subunits.

It is found in the cytoplasm. It catalyses the reaction Exonucleolytic cleavage in either 5'- to 3'- or 3'- to 5'-direction to yield nucleoside 5'-phosphates.. In terms of biological role, bidirectionally degrades single-stranded DNA into large acid-insoluble oligonucleotides, which are then degraded further into small acid-soluble oligonucleotides. This is Exodeoxyribonuclease 7 small subunit from Listeria monocytogenes serotype 4b (strain CLIP80459).